The chain runs to 546 residues: MTVTVEPSITTGPIAGSSKAYREVAGPDGVTLRVPLRRVHLSTGADFDLYDTSGPYTDPNAVIDLAVGLPARPGLVRDRGTQLQRARAGEITAEMAFIAAREGMSAELVRDEVALGRAVIPANHNHPESEPMVIGKAFAVKVNANIGNSAVTSSIAEEVDKMVWATRWGADTIMDLSTGKNIHETREWILRNSPVPVGTVPIYQALEKVKGDPTELTWELYRDTVIEQCEQGVDYMTVHAGVLLRYVPLTAKRVTGIVSRGGSIMAAWCLAHHRESFLYTNFEELCDILARYDVTFSLGDGLRPGSIADANDAAQFAELRTLGELTKIAKAHGVQVMIEGPGHVPMHKIVENVRLEEELCEEAPFYTLGPLATDIAPAYDHITSAIGAAIIAQAGTAMLCYVTPKEHLGLPDRKDVKDGVIAYKIAAHAGDLAKGHPHAQERDNALSQARFEFRWNDQFALSLDPDTAREYHDETLPAEPAKTAHFCSMCGPKFCSMRITQDVRDYAAKHGLDSEEAIEAALEAGMAEKSAEFADHGNRVYLPITQ.

Substrate contacts are provided by residues asparagine 145, methionine 174, tyrosine 203, histidine 239, 259 to 261, 300 to 303, and glutamate 339; these read SRG and DGLR. Histidine 343 is a Zn(2+) binding site. A substrate-binding site is contributed by tyrosine 366. Histidine 407 contributes to the Zn(2+) binding site. Positions 487, 490, and 495 each coordinate [4Fe-4S] cluster.

The protein belongs to the ThiC family. [4Fe-4S] cluster is required as a cofactor.

The catalysed reaction is 5-amino-1-(5-phospho-beta-D-ribosyl)imidazole + S-adenosyl-L-methionine = 4-amino-2-methyl-5-(phosphooxymethyl)pyrimidine + CO + 5'-deoxyadenosine + formate + L-methionine + 3 H(+). It functions in the pathway cofactor biosynthesis; thiamine diphosphate biosynthesis. Its function is as follows. Catalyzes the synthesis of the hydroxymethylpyrimidine phosphate (HMP-P) moiety of thiamine from aminoimidazole ribotide (AIR) in a radical S-adenosyl-L-methionine (SAM)-dependent reaction. This Mycobacterium marinum (strain ATCC BAA-535 / M) protein is Phosphomethylpyrimidine synthase.